The primary structure comprises 275 residues: Elongation factor Ts (275 aa).

The segment at 80 to 83 is involved in Mg(2+) ion dislocation from EF-Tu; that stretch reads TDFV.

This sequence belongs to the EF-Ts family.

The protein resides in the cytoplasm. Functionally, associates with the EF-Tu.GDP complex and induces the exchange of GDP to GTP. It remains bound to the aminoacyl-tRNA.EF-Tu.GTP complex up to the GTP hydrolysis stage on the ribosome. This is Elongation factor Ts from Kineococcus radiotolerans (strain ATCC BAA-149 / DSM 14245 / SRS30216).